The chain runs to 159 residues: Cyclic pyranopterin monophosphate synthase (159 aa).

Substrate is bound by residues 75–77 (LCH) and 113–114 (ME). Asp128 is a catalytic residue.

The protein belongs to the MoaC family. Homohexamer; trimer of dimers.

The catalysed reaction is (8S)-3',8-cyclo-7,8-dihydroguanosine 5'-triphosphate = cyclic pyranopterin phosphate + diphosphate. It functions in the pathway cofactor biosynthesis; molybdopterin biosynthesis. Catalyzes the conversion of (8S)-3',8-cyclo-7,8-dihydroguanosine 5'-triphosphate to cyclic pyranopterin monophosphate (cPMP). The protein is Cyclic pyranopterin monophosphate synthase of Yersinia pseudotuberculosis serotype O:1b (strain IP 31758).